The sequence spans 928 residues: G-protein coupled receptor family C group 6 member A (928 aa).

Positions 1-20 are cleaved as a signal peptide; that stretch reads MALLITVVTCFMIILDTSQS. The Extracellular portion of the chain corresponds to 21-594; sequence CHTPDDFVAI…EYLDWDDSLA (574 aa). N-linked (GlcNAc...) asparagine glycosylation is found at Asn332, Asn555, and Asn567. Residues 595–615 traverse the membrane as a helical segment; it reads LLLIALSLLGIAFVLAIGIIF. Residues 616-630 lie on the Cytoplasmic side of the membrane; the sequence is TRNLKTPVVKSSGGL. The chain crosses the membrane as a helical span at residues 631–651; sequence VVCYVMLICHALNFASTGFFI. The Extracellular segment spans residues 652–669; it reads GEPQDFACKTRQTLFGVS. Residues 670 to 690 form a helical membrane-spanning segment; that stretch reads FTLCVSCILTKSLKILLAFSF. At 691-706 the chain is on the cytoplasmic side; it reads DPKLTMFLKCLYRPVP. Residues 707–727 form a helical membrane-spanning segment; it reads IVLTCTGIQVVICTLWLVLAA. The Extracellular portion of the chain corresponds to 728–750; that stretch reads PSVEENISLPRVIILECEEGSAL. A helical membrane pass occupies residues 751–771; that stretch reads AFGTMLGYITVLAFICFVFAF. Residues 772-784 lie on the Cytoplasmic side of the membrane; the sequence is KGRKLPENYNEAK. Residues 785–805 traverse the membrane as a helical segment; the sequence is FLTFGMLIYFIAWITFIPVYT. Over 806–812 the chain is Extracellular; that stretch reads TTFGKYL. Residues 813 to 833 traverse the membrane as a helical segment; the sequence is PAVEIIVILISNYGILCCIFF. Residues 834-928 are Cytoplasmic-facing; the sequence is PKCYIILCKQ…TLRQKRSSSI (95 aa).

The protein belongs to the G-protein coupled receptor 3 family. As to quaternary structure, homodimer; disulfide-linked. N-glycosylated. As to expression, expressed at high level in liver, lung, spleen and heart. Expressed at lower level in kidney, skeletal muscle and brain. Expressed in 7 dpc, 11 dpc, 15 dpc and 17 dpc embryos.

It localises to the cell membrane. In terms of biological role, receptor activated by multiple ligands, including osteocalcin (BGLAP), basic amino acids, and various cations. Activated by amino acids with a preference for basic amino acids such as L-Lys, L-Arg and L-ornithine but also by small and polar amino acids. The L-alpha amino acids respond is augmented by divalent cations Ca(2+) and Mg(2+). Seems to act through a G(q)/G(11) and G(i)-coupled pathway. Regulates testosterone production by acting as a ligand for uncarboxylated osteocalcin hormone: osteocalcin-binding at the surface of Leydig cells initiates a signaling response that promotes the expression of enzymes required for testosterone synthesis in a CREB-dependent manner. Mediates the non-genomic effects of androgens in multiple tissue. May coordinate nutritional and hormonal anabolic signals through the sensing of extracellular amino acids, osteocalcin, divalent ions and its responsiveness to anabolic steroids. The polypeptide is G-protein coupled receptor family C group 6 member A (Gprc6a) (Mus musculus (Mouse)).